A 510-amino-acid polypeptide reads, in one-letter code: ATP synthase subunit alpha 1 (510 aa).

ATP is bound at residue 167-174 (GDRATGKT).

Belongs to the ATPase alpha/beta chains family. As to quaternary structure, F-type ATPases have 2 components, CF(1) - the catalytic core - and CF(0) - the membrane proton channel. CF(1) has five subunits: alpha(3), beta(3), gamma(1), delta(1), epsilon(1). CF(0) has three main subunits: a(1), b(2) and c(9-12). The alpha and beta chains form an alternating ring which encloses part of the gamma chain. CF(1) is attached to CF(0) by a central stalk formed by the gamma and epsilon chains, while a peripheral stalk is formed by the delta and b chains.

It is found in the cell inner membrane. The enzyme catalyses ATP + H2O + 4 H(+)(in) = ADP + phosphate + 5 H(+)(out). Functionally, produces ATP from ADP in the presence of a proton gradient across the membrane. The alpha chain is a regulatory subunit. In Paraburkholderia xenovorans (strain LB400), this protein is ATP synthase subunit alpha 1.